Here is a 388-residue protein sequence, read N- to C-terminus: Succinate--CoA ligase [ADP-forming] subunit beta (388 aa).

The region spanning 9–244 (KEIFRSMGVA…LEEEDPKEIE (236 aa)) is the ATP-grasp domain. ATP-binding positions include lysine 46, 53–55 (GRG), glutamate 99, cysteine 102, and glutamate 107. Mg(2+) contacts are provided by asparagine 199 and aspartate 213. Substrate is bound by residues asparagine 264 and 321 to 323 (GIM).

The protein belongs to the succinate/malate CoA ligase beta subunit family. Heterotetramer of two alpha and two beta subunits. The cofactor is Mg(2+).

It carries out the reaction succinate + ATP + CoA = succinyl-CoA + ADP + phosphate. The catalysed reaction is GTP + succinate + CoA = succinyl-CoA + GDP + phosphate. The protein operates within carbohydrate metabolism; tricarboxylic acid cycle; succinate from succinyl-CoA (ligase route): step 1/1. Succinyl-CoA synthetase functions in the citric acid cycle (TCA), coupling the hydrolysis of succinyl-CoA to the synthesis of either ATP or GTP and thus represents the only step of substrate-level phosphorylation in the TCA. The beta subunit provides nucleotide specificity of the enzyme and binds the substrate succinate, while the binding sites for coenzyme A and phosphate are found in the alpha subunit. This chain is Succinate--CoA ligase [ADP-forming] subunit beta, found in Staphylococcus aureus (strain MRSA252).